Consider the following 343-residue polypeptide: Heat-inducible transcription repressor HrcA (343 aa).

This sequence belongs to the HrcA family.

Functionally, negative regulator of class I heat shock genes (grpE-dnaK-dnaJ and groELS operons). Prevents heat-shock induction of these operons. The sequence is that of Heat-inducible transcription repressor HrcA from Bacillus pumilus (strain SAFR-032).